A 477-amino-acid polypeptide reads, in one-letter code: Bifunctional protein HldE (477 aa).

Positions 1–318 (MKVTLPDFRR…ENAIRGRADT (318 aa)) are ribokinase. 195–198 (NLSE) serves as a coordination point for ATP. Asp264 is a catalytic residue. The cytidylyltransferase stretch occupies residues 344-477 (MTNGVFDILH…INIIRQGQND (134 aa)).

This sequence in the N-terminal section; belongs to the carbohydrate kinase PfkB family. In the C-terminal section; belongs to the cytidylyltransferase family. Homodimer.

It catalyses the reaction D-glycero-beta-D-manno-heptose 7-phosphate + ATP = D-glycero-beta-D-manno-heptose 1,7-bisphosphate + ADP + H(+). The catalysed reaction is D-glycero-beta-D-manno-heptose 1-phosphate + ATP + H(+) = ADP-D-glycero-beta-D-manno-heptose + diphosphate. Its pathway is nucleotide-sugar biosynthesis; ADP-L-glycero-beta-D-manno-heptose biosynthesis; ADP-L-glycero-beta-D-manno-heptose from D-glycero-beta-D-manno-heptose 7-phosphate: step 1/4. The protein operates within nucleotide-sugar biosynthesis; ADP-L-glycero-beta-D-manno-heptose biosynthesis; ADP-L-glycero-beta-D-manno-heptose from D-glycero-beta-D-manno-heptose 7-phosphate: step 3/4. Functionally, catalyzes the phosphorylation of D-glycero-D-manno-heptose 7-phosphate at the C-1 position to selectively form D-glycero-beta-D-manno-heptose-1,7-bisphosphate. Its function is as follows. Catalyzes the ADP transfer from ATP to D-glycero-beta-D-manno-heptose 1-phosphate, yielding ADP-D-glycero-beta-D-manno-heptose. The protein is Bifunctional protein HldE of Edwardsiella ictaluri (strain 93-146).